A 423-amino-acid polypeptide reads, in one-letter code: MTQTTAAVICGEKDIQLRTFELPSISADELLVKNISNSVCLSTYKAALLGSKHKRVPENIDEVPVITGHEYAGVIVEVGENLKDQFKAGDSFVLQPAMGLPTGYSAGYSYETFGGNATYSIIPKIAIDLGCVLPYDGSYYADASLAEPMSCIIGAFHASYHTTQFVYEHEMGIKEGGTLALLACAGPMGIGAIDYAINGPVKPRRIVVTDIDEDRLSRAESLIPVSAAKAQGIELIYVNTIEMEDPVTYLKSLNDDQGYDDVMVYAAVAQVLEQADALLGNDGCLNFFAGPTDKEFKVPFNFYNVHYESTHIVGTSGGSTGDMVESLELSAQGDINPSFMITHVGGLQAAPHTILNQLDIPGGKKLIYPHIDLPLTAIDNFASLAEQDPFFSELDAILAKNNYVWNQHAEKALLEFYDVSLSV.

3 residues coordinate Zn(2+): Cys-40, His-69, and Glu-70.

It belongs to the zinc-containing alcohol dehydrogenase family. It depends on Zn(2+) as a cofactor.

It catalyses the reaction D-mannitol 1-phosphate + NAD(+) = beta-D-fructose 6-phosphate + NADH + H(+). In terms of biological role, seems to be involved in mannitol utilization. Complements an E.coli mtlD deletion mutant. In Aliivibrio fischeri (strain ATCC 700601 / ES114) (Vibrio fischeri), this protein is Mannitol-1-phosphate 5-dehydrogenase.